The primary structure comprises 285 residues: uncharacterized protein (285 aa).

Residues 197–217 (PTIGALLSLVSAFFSFIPFLM) form a helical membrane-spanning segment.

Its subcellular location is the membrane. This is an uncharacterized protein from Saccharomyces cerevisiae (strain ATCC 204508 / S288c) (Baker's yeast).